Consider the following 1086-residue polypeptide: DNA polymerase (1086 aa).

The segment at 638 to 657 (STTRKPVDDVEEHSECNGFT) is disordered.

The protein belongs to the DNA polymerase type-B family.

The catalysed reaction is DNA(n) + a 2'-deoxyribonucleoside 5'-triphosphate = DNA(n+1) + diphosphate. In terms of biological role, replicates the viral genome. Host DNA polymerases cannot substitute for the viral enzyme in this process. This is DNA polymerase from Noctuidae (owlet moths).